The chain runs to 444 residues: Homogentisate 1,2-dioxygenase (444 aa).

Histidine 298 (proton acceptor) is an active-site residue. Fe cation contacts are provided by histidine 341 and glutamate 347. Homogentisate contacts are provided by tyrosine 356 and histidine 377. Histidine 377 is a binding site for Fe cation.

Belongs to the homogentisate dioxygenase family. Hexamer; dimer of trimers. Requires Fe cation as cofactor.

The enzyme catalyses homogentisate + O2 = 4-maleylacetoacetate + H(+). It functions in the pathway amino-acid degradation; L-phenylalanine degradation; acetoacetate and fumarate from L-phenylalanine: step 4/6. Its function is as follows. Involved in the catabolism of homogentisate (2,5-dihydroxyphenylacetate or 2,5-OH-PhAc), a central intermediate in the degradation of phenylalanine and tyrosine. Catalyzes the oxidative ring cleavage of the aromatic ring of homogentisate to yield maleylacetoacetate. In Burkholderia cenocepacia (strain ATCC BAA-245 / DSM 16553 / LMG 16656 / NCTC 13227 / J2315 / CF5610) (Burkholderia cepacia (strain J2315)), this protein is Homogentisate 1,2-dioxygenase.